The primary structure comprises 405 residues: tRNA-specific 2-thiouridylase MnmA (405 aa).

Residues 41–48 (AMSGGVDS) and leucine 67 each bind ATP. The active-site Nucleophile is cysteine 135. An intrachain disulfide couples cysteine 135 to cysteine 231. Glycine 159 contacts ATP. An interaction with tRNA region spans residues 181-183 (KDQ). The Cysteine persulfide intermediate role is filled by cysteine 231.

Belongs to the MnmA/TRMU family.

The protein resides in the cytoplasm. It carries out the reaction S-sulfanyl-L-cysteinyl-[protein] + uridine(34) in tRNA + AH2 + ATP = 2-thiouridine(34) in tRNA + L-cysteinyl-[protein] + A + AMP + diphosphate + H(+). Catalyzes the 2-thiolation of uridine at the wobble position (U34) of tRNA, leading to the formation of s(2)U34. This chain is tRNA-specific 2-thiouridylase MnmA, found in Maricaulis maris (strain MCS10) (Caulobacter maris).